The following is a 160-amino-acid chain: Cyclic pyranopterin monophosphate synthase (160 aa).

Substrate contacts are provided by residues 77-79 (MCH) and 114-115 (ME). Asp-129 is a catalytic residue.

Belongs to the MoaC family. Homohexamer; trimer of dimers.

The enzyme catalyses (8S)-3',8-cyclo-7,8-dihydroguanosine 5'-triphosphate = cyclic pyranopterin phosphate + diphosphate. Its pathway is cofactor biosynthesis; molybdopterin biosynthesis. Its function is as follows. Catalyzes the conversion of (8S)-3',8-cyclo-7,8-dihydroguanosine 5'-triphosphate to cyclic pyranopterin monophosphate (cPMP). In Listeria monocytogenes serotype 4a (strain HCC23), this protein is Cyclic pyranopterin monophosphate synthase.